The chain runs to 195 residues: ATP-dependent Clp protease proteolytic subunit 2 (195 aa).

The Nucleophile role is filled by serine 92. Histidine 117 is a catalytic residue.

This sequence belongs to the peptidase S14 family. Fourteen ClpP subunits assemble into 2 heptameric rings which stack back to back to give a disk-like structure with a central cavity, resembling the structure of eukaryotic proteasomes.

It localises to the cytoplasm. It catalyses the reaction Hydrolysis of proteins to small peptides in the presence of ATP and magnesium. alpha-casein is the usual test substrate. In the absence of ATP, only oligopeptides shorter than five residues are hydrolyzed (such as succinyl-Leu-Tyr-|-NHMec, and Leu-Tyr-Leu-|-Tyr-Trp, in which cleavage of the -Tyr-|-Leu- and -Tyr-|-Trp bonds also occurs).. Functionally, cleaves peptides in various proteins in a process that requires ATP hydrolysis. Has a chymotrypsin-like activity. Plays a major role in the degradation of misfolded proteins. This chain is ATP-dependent Clp protease proteolytic subunit 2, found in Rhodococcus jostii (strain RHA1).